Here is a 469-residue protein sequence, read N- to C-terminus: 3-isopropylmalate dehydratase large subunit (469 aa).

C349, C409, and C412 together coordinate [4Fe-4S] cluster.

It belongs to the aconitase/IPM isomerase family. LeuC type 1 subfamily. In terms of assembly, heterodimer of LeuC and LeuD. It depends on [4Fe-4S] cluster as a cofactor.

It carries out the reaction (2R,3S)-3-isopropylmalate = (2S)-2-isopropylmalate. It functions in the pathway amino-acid biosynthesis; L-leucine biosynthesis; L-leucine from 3-methyl-2-oxobutanoate: step 2/4. Functionally, catalyzes the isomerization between 2-isopropylmalate and 3-isopropylmalate, via the formation of 2-isopropylmaleate. This chain is 3-isopropylmalate dehydratase large subunit, found in Methylorubrum populi (strain ATCC BAA-705 / NCIMB 13946 / BJ001) (Methylobacterium populi).